Consider the following 118-residue polypeptide: UPF0102 protein PC1_0307 (118 aa).

Belongs to the UPF0102 family.

The sequence is that of UPF0102 protein PC1_0307 from Pectobacterium carotovorum subsp. carotovorum (strain PC1).